Here is a 476-residue protein sequence, read N- to C-terminus: Aspartyl/glutamyl-tRNA(Asn/Gln) amidotransferase subunit B (476 aa).

Belongs to the GatB/GatE family. GatB subfamily. As to quaternary structure, heterotrimer of A, B and C subunits.

The catalysed reaction is L-glutamyl-tRNA(Gln) + L-glutamine + ATP + H2O = L-glutaminyl-tRNA(Gln) + L-glutamate + ADP + phosphate + H(+). It catalyses the reaction L-aspartyl-tRNA(Asn) + L-glutamine + ATP + H2O = L-asparaginyl-tRNA(Asn) + L-glutamate + ADP + phosphate + 2 H(+). Allows the formation of correctly charged Asn-tRNA(Asn) or Gln-tRNA(Gln) through the transamidation of misacylated Asp-tRNA(Asn) or Glu-tRNA(Gln) in organisms which lack either or both of asparaginyl-tRNA or glutaminyl-tRNA synthetases. The reaction takes place in the presence of glutamine and ATP through an activated phospho-Asp-tRNA(Asn) or phospho-Glu-tRNA(Gln). The polypeptide is Aspartyl/glutamyl-tRNA(Asn/Gln) amidotransferase subunit B (Albidiferax ferrireducens (strain ATCC BAA-621 / DSM 15236 / T118) (Rhodoferax ferrireducens)).